The chain runs to 282 residues: Putative hydrolase Bcen_5340 (282 aa).

Mg(2+)-binding residues include Glu-124, Glu-126, and Asp-155.

The protein belongs to the FAH family. Requires Mg(2+) as cofactor.

The sequence is that of Putative hydrolase Bcen_5340 from Burkholderia orbicola (strain AU 1054).